The following is a 155-amino-acid chain: Ribosomal RNA large subunit methyltransferase H (155 aa).

S-adenosyl-L-methionine contacts are provided by residues Leu72, Gly103, and 122–127 (LSPLTL).

This sequence belongs to the RNA methyltransferase RlmH family. Homodimer.

The protein localises to the cytoplasm. It catalyses the reaction pseudouridine(1915) in 23S rRNA + S-adenosyl-L-methionine = N(3)-methylpseudouridine(1915) in 23S rRNA + S-adenosyl-L-homocysteine + H(+). Functionally, specifically methylates the pseudouridine at position 1915 (m3Psi1915) in 23S rRNA. In Actinobacillus pleuropneumoniae serotype 3 (strain JL03), this protein is Ribosomal RNA large subunit methyltransferase H.